The following is a 438-amino-acid chain: MKKTHITEHKFADFGLQPQVIDGLEKKGFVYCTPIQALALPVLLSGQDIAGQAQTGTGKTLAFLTATFNHLLTTPAAEGRAETQPRAIIMAPTRELAIQIFNDAEPLLASTGLKAALAYGGESYDKQLAKLQSGVDILIGTTGRIIDFYKQRVFNLNHIQAVVLDEADRMFDLGFIKDIRFLFRRMPEPKDRLNMLFSATLSYRVQELAFEHMNNPEHVVVEPEQKTGHRIQEELFYPSNEHKMALLQTLIEEEWPDRAIIFANTKHRCEQIWAHLAADNHRVGLLTGDVPQKKRERILEQFTQGDVDILVATDVAARGLHIPQVTHVFNYDLPDDCEDYVHRIGRTGRAGASGHSISFACEEYAINLPAIESYIEHAIPTSDYDPSALLTDLPAPLSLRSSPQQRRTNTAGSRNSNNGGNRKPQQRRPRAPRPKKEA.

The Q motif motif lies at 9–37; the sequence is HKFADFGLQPQVIDGLEKKGFVYCTPIQA. One can recognise a Helicase ATP-binding domain in the interval 40-219; the sequence is LPVLLSGQDI…FEHMNNPEHV (180 aa). An ATP-binding site is contributed by 53-60; that stretch reads AQTGTGKT. The DEAD box motif lies at 165-168; it reads DEAD. The region spanning 245–390 is the Helicase C-terminal domain; that stretch reads ALLQTLIEEE…TSDYDPSALL (146 aa). Residues 394–438 form a disordered region; that stretch reads PAPLSLRSSPQQRRTNTAGSRNSNNGGNRKPQQRRPRAPRPKKEA. Residues 406-423 are compositionally biased toward low complexity; the sequence is RRTNTAGSRNSNNGGNRK. The span at 424-438 shows a compositional bias: basic residues; it reads PQQRRPRAPRPKKEA.

The protein belongs to the DEAD box helicase family. RhlB subfamily. Component of the RNA degradosome, which is a multiprotein complex involved in RNA processing and mRNA degradation.

It localises to the cytoplasm. It catalyses the reaction ATP + H2O = ADP + phosphate + H(+). Its function is as follows. DEAD-box RNA helicase involved in RNA degradation. Has RNA-dependent ATPase activity and unwinds double-stranded RNA. The protein is ATP-dependent RNA helicase RhlB of Vibrio cholerae serotype O1 (strain ATCC 39541 / Classical Ogawa 395 / O395).